A 302-amino-acid polypeptide reads, in one-letter code: Deoxyhypusine hydroxylase (302 aa).

At M1 the chain carries N-acetylmethionine. 5 HEAT-like PBS-type repeats span residues 54 to 80 (LKHE…VLQD), 87 to 113 (VRHE…YSTD), 175 to 201 (ERYR…GLQC), 206 to 232 (FRHE…TLAR), and 239 to 265 (VRHE…HIED). Fe cation is bound by residues H56, H89, and E90. Fe cation contacts are provided by H208, H241, and E242.

The protein belongs to the deoxyhypusine hydroxylase family. Requires Fe(2+) as cofactor.

It catalyses the reaction [eIF5A protein]-deoxyhypusine + AH2 + O2 = [eIF5A protein]-hypusine + A + H2O. The protein operates within protein modification; eIF5A hypusination. In terms of biological role, catalyzes the hydroxylation of the N(6)-(4-aminobutyl)-L-lysine intermediate produced by deoxyhypusine synthase/DHPS on a critical lysine of the eukaryotic translation initiation factor 5A/eIF-5A. This is the second step of the post-translational modification of that lysine into an unusual amino acid residue named hypusine. Hypusination is unique to mature eIF-5A factor and is essential for its function. The protein is Deoxyhypusine hydroxylase of Mus musculus (Mouse).